Consider the following 252-residue polypeptide: MSAPRTCYGIIPARYASSRFPGKPLAEILGRPMFWHVYDRARRCAAFDEVALATDDARIADAANVLGVPCVMTAEHHPSGTDRVHEAAMRLGVPDDAVVVNIQGDEPALDPRMLDQLVAPFADASVRVATLAMALSAQEAQSPDRVKVVVAANGDALYFSRADIPFVRDGDVGGDTAGRLGHIGLYAFRMEALRRFTQLPPSRLEQTEKLEQLRLLENGIAIRVVPTTYRTHGVDRPEDIDVIINLLRENDG.

This sequence belongs to the KdsB family.

The protein localises to the cytoplasm. The catalysed reaction is 3-deoxy-alpha-D-manno-oct-2-ulosonate + CTP = CMP-3-deoxy-beta-D-manno-octulosonate + diphosphate. It functions in the pathway nucleotide-sugar biosynthesis; CMP-3-deoxy-D-manno-octulosonate biosynthesis; CMP-3-deoxy-D-manno-octulosonate from 3-deoxy-D-manno-octulosonate and CTP: step 1/1. Its pathway is bacterial outer membrane biogenesis; lipopolysaccharide biosynthesis. Functionally, activates KDO (a required 8-carbon sugar) for incorporation into bacterial lipopolysaccharide in Gram-negative bacteria. The protein is 3-deoxy-manno-octulosonate cytidylyltransferase of Nitratidesulfovibrio vulgaris (strain ATCC 29579 / DSM 644 / CCUG 34227 / NCIMB 8303 / VKM B-1760 / Hildenborough) (Desulfovibrio vulgaris).